A 204-amino-acid chain; its full sequence is bMERB domain-containing protein 1 (204 aa).

The 148-residue stretch at 3–150 (LKQSLSTHLE…EQEEDKEMAD (148 aa)) folds into the bMERB domain. The tract at residues 162–187 (VTKSPASSRAEKKAEPPPSKPTVAKT) is disordered.

The protein is bMERB domain-containing protein 1 (BMERB1) of Pongo abelii (Sumatran orangutan).